Here is a 239-residue protein sequence, read N- to C-terminus: Cysteine-rich venom protein natrin-1 (239 aa).

Positions methionine 1–glycine 18 are cleaved as a signal peptide. An SCP domain is found at valine 37–tyrosine 165. Cystine bridges form between cysteine 74–cysteine 152, cysteine 91–cysteine 166, cysteine 147–cysteine 163, cysteine 185–cysteine 192, cysteine 188–cysteine 197, cysteine 201–cysteine 234, cysteine 210–cysteine 228, and cysteine 219–cysteine 232. The 34-residue stretch at cysteine 201 to cysteine 234 folds into the ShKT domain.

As to expression, expressed by the venom gland.

The protein localises to the secreted. Inhibits calcium-activated potassium channels (KCa1.1/KCNMA1), voltage-gated potassium channel Kv1.3/KCNA3, and the calcium release channel/ryanodine receptor (RyR). Binds specifically to type 1 RyR (RyR1) from skeletal muscle. Inhibit both the binding of ryanodine to RyR1, and RyR1's calcium-channel activity. Inhibits carbachol-induced muscle contraction and weakly blocks muscle contraction evoked by potassium. The chain is Cysteine-rich venom protein natrin-1 from Naja atra (Chinese cobra).